The primary structure comprises 119 residues: MAKRGGFPGGNMPGNMNNLMKQAQRMQKQMEDKTKEMEEKQWEATAGGGAVTVTVSGKKEVVSVKLSKEVVDPDDIEMLEDLIVAATNEALRKMEEESASAMNSIAGGLGNFGGLGGLF.

Positions 23-45 (AQRMQKQMEDKTKEMEEKQWEAT) are disordered. Residues 28-42 (KQMEDKTKEMEEKQW) are compositionally biased toward basic and acidic residues.

Belongs to the YbaB/EbfC family. Homodimer.

The protein resides in the cytoplasm. Its subcellular location is the nucleoid. In terms of biological role, binds to DNA and alters its conformation. May be involved in regulation of gene expression, nucleoid organization and DNA protection. The chain is Nucleoid-associated protein Cphy_0047 from Lachnoclostridium phytofermentans (strain ATCC 700394 / DSM 18823 / ISDg) (Clostridium phytofermentans).